The chain runs to 373 residues: Cytoplasmic tRNA 2-thiolation protein 1 (373 aa).

Belongs to the TtcA family. CTU1/NCS6/ATPBD3 subfamily.

It localises to the cytoplasm. The protein operates within tRNA modification; 5-methoxycarbonylmethyl-2-thiouridine-tRNA biosynthesis. In terms of biological role, plays a central role in 2-thiolation of mcm(5)S(2)U at tRNA wobble positions of tRNA(Lys), tRNA(Glu) and tRNA(Gln). Directly binds tRNAs and probably acts by catalyzing adenylation of tRNAs, an intermediate required for 2-thiolation. It is unclear whether it acts as a sulfurtransferase that transfers sulfur from thiocarboxylated URM1 onto the uridine of tRNAs at wobble position. Prior mcm(5) tRNA modification by the elongator complex is required for 2-thiolation. May also be involved in protein urmylation. This Malassezia globosa (strain ATCC MYA-4612 / CBS 7966) (Dandruff-associated fungus) protein is Cytoplasmic tRNA 2-thiolation protein 1.